We begin with the raw amino-acid sequence, 305 residues long: Oxidoreductase OpS7 (305 aa).

Belongs to the oxidoreductase OpS7 family.

Its pathway is secondary metabolite biosynthesis. Its function is as follows. Oxidoreductase; part of the gene cluster that mediates the biosynthesis of the bibenzoquinone oosporein, a metabolite required for fungal virulence that acts by evading host immunity to facilitate fungal multiplication in insects. The non-reducing polyketide synthase OpS1 produces orsellinic acid by condensing acetyl-CoA with 3 malonyl-CoA units. Orsellinic acid is then hydroxylated to benzenetriol by the hydroxylase OpS4. The intermediate is oxidized either nonenzymatically to 5,5'-dideoxy-oosporein or enzymatically to benzenetetrol by the oxidoreductase OpS7. The latter is further dimerized to oosporein by the catalase OpS5. OpS6 probably functions en route for protecting cells against oxidative stress by scavenging any leaked free radical form of benzenetetrol by activating the thiol group of glutathione. This is Oxidoreductase OpS7 from Beauveria bassiana (strain ARSEF 2860) (White muscardine disease fungus).